The sequence spans 159 residues: Protein-export protein SecB (159 aa).

This sequence belongs to the SecB family. As to quaternary structure, homotetramer, a dimer of dimers. One homotetramer interacts with 1 SecA dimer.

It is found in the cytoplasm. One of the proteins required for the normal export of preproteins out of the cell cytoplasm. It is a molecular chaperone that binds to a subset of precursor proteins, maintaining them in a translocation-competent state. It also specifically binds to its receptor SecA. The protein is Protein-export protein SecB of Bartonella bacilliformis (strain ATCC 35685 / KC583 / Herrer 020/F12,63).